A 100-amino-acid chain; its full sequence is Apolipoprotein C-II (100 aa).

Positions 1 to 22 (MDSRFLLALFLVLLVLGCEVQA) are cleaved as a signal peptide. The segment at 66 to 74 (SVDEKLRDM) is lipid binding. The tract at residues 78-100 (SSAAMTTYAIIFTDQILTLLKGE) is lipoprotein lipase cofactor.

This sequence belongs to the apolipoprotein C2 family. Proapolipoprotein C-II is synthesized as a sialic acid containing glycoprotein which is subsequently desialylated prior to its proteolytic processing. In terms of processing, proapolipoprotein C-II, the major form found in plasma undergoes proteolytic cleavage of its N-terminal hexapeptide to generate the mature form apolipoprotein C-II, which occurs as the minor form in plasma.

Its subcellular location is the secreted. Component of chylomicrons, very low-density lipoproteins (VLDL), low-density lipoproteins (LDL), and high-density lipoproteins (HDL) in plasma. Plays an important role in lipoprotein metabolism as an activator of lipoprotein lipase. The sequence is that of Apolipoprotein C-II (APOC2) from Myodes glareolus (Bank vole).